The following is a 448-amino-acid chain: Probable glycine dehydrogenase (decarboxylating) subunit 1 (448 aa).

This sequence belongs to the GcvP family. N-terminal subunit subfamily. In terms of assembly, the glycine cleavage system is composed of four proteins: P, T, L and H. In this organism, the P 'protein' is a heterodimer of two subunits.

The catalysed reaction is N(6)-[(R)-lipoyl]-L-lysyl-[glycine-cleavage complex H protein] + glycine + H(+) = N(6)-[(R)-S(8)-aminomethyldihydrolipoyl]-L-lysyl-[glycine-cleavage complex H protein] + CO2. In terms of biological role, the glycine cleavage system catalyzes the degradation of glycine. The P protein binds the alpha-amino group of glycine through its pyridoxal phosphate cofactor; CO(2) is released and the remaining methylamine moiety is then transferred to the lipoamide cofactor of the H protein. This is Probable glycine dehydrogenase (decarboxylating) subunit 1 from Bacillus velezensis (strain DSM 23117 / BGSC 10A6 / LMG 26770 / FZB42) (Bacillus amyloliquefaciens subsp. plantarum).